We begin with the raw amino-acid sequence, 382 residues long: Succinyl-diaminopimelate desuccinylase (382 aa).

Residue H72 participates in Zn(2+) binding. The active site involves D74. Position 105 (D105) interacts with Zn(2+). E139 serves as the catalytic Proton acceptor. Positions 140, 168, and 354 each coordinate Zn(2+).

The protein belongs to the peptidase M20A family. DapE subfamily. In terms of assembly, homodimer. Zn(2+) serves as cofactor. The cofactor is Co(2+).

It carries out the reaction N-succinyl-(2S,6S)-2,6-diaminopimelate + H2O = (2S,6S)-2,6-diaminopimelate + succinate. It participates in amino-acid biosynthesis; L-lysine biosynthesis via DAP pathway; LL-2,6-diaminopimelate from (S)-tetrahydrodipicolinate (succinylase route): step 3/3. Catalyzes the hydrolysis of N-succinyl-L,L-diaminopimelic acid (SDAP), forming succinate and LL-2,6-diaminopimelate (DAP), an intermediate involved in the bacterial biosynthesis of lysine and meso-diaminopimelic acid, an essential component of bacterial cell walls. This is Succinyl-diaminopimelate desuccinylase from Shewanella amazonensis (strain ATCC BAA-1098 / SB2B).